A 233-amino-acid polypeptide reads, in one-letter code: Type II methyltransferase M.MunI (233 aa).

Belongs to the MT-A70-like family.

The catalysed reaction is a 2'-deoxyadenosine in DNA + S-adenosyl-L-methionine = an N(6)-methyl-2'-deoxyadenosine in DNA + S-adenosyl-L-homocysteine + H(+). A methylase that recognizes the double-stranded sequence 5'-CAATTG-3', methylates A-3 on both strands, and protects the DNA from cleavage by the MunI endonuclease. The protein is Type II methyltransferase M.MunI of Mycoplasma sp.